The sequence spans 377 residues: 3-dehydroquinate synthase (377 aa).

Residues 113–117 (GVIGD), 137–138 (TT), K150, K159, and 177–180 (FLDT) contribute to the NAD(+) site. Zn(2+) contacts are provided by E192, H254, and H273.

Belongs to the sugar phosphate cyclases superfamily. Dehydroquinate synthase family. Co(2+) is required as a cofactor. The cofactor is Zn(2+). Requires NAD(+) as cofactor.

The protein localises to the cytoplasm. The catalysed reaction is 7-phospho-2-dehydro-3-deoxy-D-arabino-heptonate = 3-dehydroquinate + phosphate. The protein operates within metabolic intermediate biosynthesis; chorismate biosynthesis; chorismate from D-erythrose 4-phosphate and phosphoenolpyruvate: step 2/7. Functionally, catalyzes the conversion of 3-deoxy-D-arabino-heptulosonate 7-phosphate (DAHP) to dehydroquinate (DHQ). This is 3-dehydroquinate synthase from Bartonella quintana (strain Toulouse) (Rochalimaea quintana).